A 488-amino-acid polypeptide reads, in one-letter code: NADH-ubiquinone oxidoreductase chain 4 (488 aa).

14 consecutive transmembrane segments (helical) span residues 1–21, 34–54, 79–99, 110–130, 134–154, 164–184, 207–227, 238–258, 272–292, 301–321, 328–348, 367–387, 407–427, and 452–472; these read MFLL…IEGN, SIAL…FILF, VDGL…IAIL, VLSF…VFLV, LLFY…IGLF, FYLF…IVAM, LFLF…SFLN, PLSG…YGIF, YTYI…FSTL, IAYS…SNTI, IALG…AGGI, VMPI…GTPL, LLGV…IFMY, and FIML…PAPI.

It belongs to the complex I subunit 4 family.

The protein resides in the mitochondrion membrane. The enzyme catalyses a ubiquinone + NADH + 5 H(+)(in) = a ubiquinol + NAD(+) + 4 H(+)(out). Functionally, core subunit of the mitochondrial membrane respiratory chain NADH dehydrogenase (Complex I) that is believed to belong to the minimal assembly required for catalysis. Complex I functions in the transfer of electrons from NADH to the respiratory chain. The immediate electron acceptor for the enzyme is believed to be ubiquinone. The protein is NADH-ubiquinone oxidoreductase chain 4 (ND4) of Aspergillus amstelodami.